A 1903-amino-acid chain; its full sequence is CDK5 regulatory subunit-associated protein 2 (1903 aa).

The segment at 51–94 (KVSPTRARNMKDFENQITELKKENFNLKLRIYFLEERIQQEFAG) is CM1 motif; interacts with the gTuRC. A disordered region spans residues 244-282 (KSQMASPDENVSSGELRGLSATLREEKERDAEERQKERN). Residues 246-256 (QMASPDENVSS) show a composition bias toward polar residues. Residues 266-282 (LREEKERDAEERQKERN) are compositionally biased toward basic and acidic residues. A phosphoserine mark is found at Ser-485 and Ser-544. Positions 1022-1044 (GKPGEQEGHETTHSAGRDKEVDS) are disordered. Residues 1025–1043 (GEQEGHETTHSAGRDKEVD) are compositionally biased toward basic and acidic residues. Phosphothreonine is present on Thr-1193. Phosphoserine occurs at positions 1241 and 1243. Residues 1349–1387 (QHLLPESPEPSASHALSDDEMSEKSFLSREPKPDSETEK) are disordered. Basic and acidic residues predominate over residues 1370–1387 (SEKSFLSREPKPDSETEK). A phosphoserine mark is found at Ser-1495, Ser-1673, and Ser-1676. Residues 1736-1778 (HMLCLIEDYDALYKQISWGQTLLAKMDIQTQEALSPTSQKLGP) form an interaction with CDK5R1 region. Required for centrosomal attachment, Golgi localization and CALM1 interaction regions lie at residues 1736-1903 (HMLC…RPGS) and 1871-1880 (VITHQVLRKA). Residues 1883–1903 (NLELRPRAAHPGTSSPSRPGS) are disordered. Over residues 1894-1903 (GTSSPSRPGS) the composition is skewed to polar residues. Position 1903 is a phosphoserine (Ser-1903).

Homodimer. Interacts with CDK5R1 (p35 form). CDK5RAP1, CDK5RAP2 and CDK5RAP3 show competitive binding to CDK5R1. May form a complex with CDK5R1 and CDK5. Interacts with pericentrin/PCNT; the interaction is leading to centrosomal and Golgi localization of CDK5RAP2 and PCNT. Interacts with AKAP9; the interaction targets CDK5RAP2 and AKAP9 to Golgi apparatus. Interacts with TUBG1; the interaction is leading to the centrosomal localization of CDK5RAP2 and TUBG1. Interacts with TUBGCP3. Interacts with CALM1. Interacts with CDC20. Interacts with CEP68; degradation of CEP68 in early mitosis leads to removal of CDK5RAP2 from the centrosome which promotes centriole disengagement and subsequent centriole separation. Interacts with NCKAP5L. Interacts with LGALS3BP; this interaction may connect the pericentrosomal complex to the gamma-tubulin ring complex (gTuRC) to promote microtubule assembly and acetylation. Contrary to human, chimpanzee, bovine and dog orthologous proteins, does not interact with EB1/MAPRE1, possibly due to a divergence at the level of the critical residue 939, which is a proline in MAPRE1-binding orthologs and a leucine in mouse and rat. Interacts with CCDC66. Associates (via CM1 motif) with TUBGCP2 of the gTuRC; the interaction plays a role in gTuRC activation. In terms of processing, phosphorylated in vitro by CDK5.

Its subcellular location is the cytoplasm. The protein resides in the cytoskeleton. It localises to the microtubule organizing center. The protein localises to the centrosome. It is found in the golgi apparatus. In terms of biological role, potential regulator of CDK5 activity via its interaction with CDK5R1. Negative regulator of centriole disengagement (licensing) which maintains centriole engagement and cohesion. Involved in regulation of mitotic spindle orientation. Plays a role in the spindle checkpoint activation by acting as a transcriptional regulator of both BUBR1 and MAD2 promoter. Together with EB1/MAPRE1, may promote microtubule polymerization, bundle formation, growth and dynamics at the plus ends. Regulates centrosomal maturation by recruitment of the gamma-tubulin ring complex (gTuRC) onto centrosomes. In complex with PDE4DIP isoform 13/MMG8/SMYLE, MAPRE1 and AKAP9, contributes to microtubules nucleation and extension from the centrosome to the cell periphery. Required for the recruitment of AKAP9 to centrosomes. Plays a role in neurogenesis. This chain is CDK5 regulatory subunit-associated protein 2 (Cdk5rap2), found in Rattus norvegicus (Rat).